The following is a 342-amino-acid chain: Serpentine receptor class beta-16 (342 aa).

Topologically, residues 1 to 22 are extracellular; the sequence is MDRELIEICKENSATAFSVGYQ. A helical membrane pass occupies residues 23-43; that stretch reads IVYLIYVVLSVTSIFTCSYFI. Over 44–61 the chain is Cytoplasmic; it reads KTFIWNSTFHPNFKLLLT. A helical membrane pass occupies residues 62–82; the sequence is MYFFAAIFHSFLFTASYLMMI. The Extracellular portion of the chain corresponds to 83–102; that stretch reads ERFLDYQTDCDIHVSMVPYA. A helical membrane pass occupies residues 103–123; it reads IVHSSIACCLFCGMLTQVFMV. Residues 124 to 141 are Cytoplasmic-facing; the sequence is IERLLATIKIESYEHNTS. The helical transmembrane segment at 142–162 threads the bilayer; it reads FWHILAYLFFCIVLPLSLLVW. At 163–187 the chain is on the extracellular side; that stretch reads AYQDADYNSPVITAISPPKGVEIRL. The helical transmembrane segment at 188–208 threads the bilayer; that stretch reads NILYIFCFFLAILALILLQVV. Residues 209 to 237 are Cytoplasmic-facing; the sequence is RFVNKRRESRIEISLSGRFQIVENIDTTT. A helical membrane pass occupies residues 238 to 258; sequence FISSILIINMIMSVIYIVGTF. The Extracellular segment spans residues 259-274; that stretch reads TLRNFQFDAFINNQPA. A helical transmembrane segment spans residues 275 to 295; it reads LATVKTIFYLHPLFSFLMPLI. At 296-342 the chain is on the cytoplasmic side; the sequence is SSYHLSKMRERRVKRREHLMAIKTKGREGSDAYNQLLHDQWTQHFLK.

This sequence belongs to the nematode receptor-like protein srb family. In terms of tissue distribution, expressed throughout the nervous system, in pharyngeal muscle, hermaphrodite vulval muscles and in the male tail. Not expressed in male somatic gonads or sperm.

The protein resides in the cell membrane. It localises to the perikaryon. Its subcellular location is the cell projection. It is found in the dendrite. Its function is as follows. G-protein coupled receptor. Plays a role in the navigational capacity of sperm and promotes the targeting of sperm derived from males to the fertilization site in the uterus of hermaphrodites. The protein is Serpentine receptor class beta-16 of Caenorhabditis elegans.